Reading from the N-terminus, the 303-residue chain is MAKKGRGRSKGTFVAVLKNKAYFKRYQPKFKRRREGKTDYFARKRLCVQDKNKYNTPKYRLVVRVTNKDIIAQIAYARLQGDVIVTSAYAHELPRYGVSVGLTNYSAAYATGLLIGRRVLQKFGLDSMYEGQIEVDGDEFYEEADAAEKASFRCYLDTGLARTSTGARIFGVLKGCADAGIDIPHSPKRFPGFADGKLNAEAHKDHIFGGHVGDYMEKLEEENEEAYKRQFSRFIKNGINSENIEEMYKKAHAAIRADPSPKAKVEKTVDKKRWNRAKISYAQRRARVAQVKASFLRAQEAEE.

The protein belongs to the universal ribosomal protein uL18 family. Component of the large ribosomal subunit (LSU).

Its subcellular location is the cytoplasm. The protein localises to the nucleus. Functionally, component of the ribosome, a large ribonucleoprotein complex responsible for the synthesis of proteins in the cell. The small ribosomal subunit (SSU) binds messenger RNAs (mRNAs) and translates the encoded message by selecting cognate aminoacyl-transfer RNA (tRNA) molecules. The large subunit (LSU) contains the ribosomal catalytic site termed the peptidyl transferase center (PTC), which catalyzes the formation of peptide bonds, thereby polymerizing the amino acids delivered by tRNAs into a polypeptide chain. The nascent polypeptides leave the ribosome through a tunnel in the LSU and interact with protein factors that function in enzymatic processing, targeting, and the membrane insertion of nascent chains at the exit of the ribosomal tunnel. The sequence is that of Large ribosomal subunit protein uL18 (RPL5) from Oikopleura dioica (Tunicate).